Consider the following 20-residue polypeptide: Putative serine protease (20 aa).

The protein belongs to the peptidase S1 family.

It is found in the secreted. Binds the A.niger cell wall component alpha-1,3-glucan, a fungal pathogen-associated molecular pattern (PAMP) that activates the host immune response. The chain is Putative serine protease from Galleria mellonella (Greater wax moth).